The primary structure comprises 198 residues: Small ribosomal subunit protein uS4 (198 aa).

Residues 26–45 form a disordered region; the sequence is LKKRPYAPGQHGQRRSKLSN. Residues 91 to 154 form the S4 RNA-binding domain; sequence SRLDNVVYRL…KNLTIVKEAL (64 aa).

Belongs to the universal ribosomal protein uS4 family. As to quaternary structure, part of the 30S ribosomal subunit. Contacts protein S5. The interaction surface between S4 and S5 is involved in control of translational fidelity.

One of the primary rRNA binding proteins, it binds directly to 16S rRNA where it nucleates assembly of the body of the 30S subunit. In terms of biological role, with S5 and S12 plays an important role in translational accuracy. The sequence is that of Small ribosomal subunit protein uS4 from Acholeplasma laidlawii (strain PG-8A).